We begin with the raw amino-acid sequence, 517 residues long: Probable mannosyltransferase KTR7 (517 aa).

Residues 1 to 23 are Cytoplasmic-facing; it reads MAIRLNPKVRRFLLDKCRQKRYG. A helical; Signal-anchor for type II membrane protein membrane pass occupies residues 24 to 44; it reads FLFLGCIFAILYCMGTWPFFA. The interval 45 to 85 is stem region; the sequence is KDIVHDPNNLPYSLQDYSTDKDEPFFRGCTDTKLYLQNPAY. At 45–517 the chain is on the lumenal side; it reads KDIVHDPNNL…IRRENFRVIE (473 aa). Residues 86-517 are catalytic; the sequence is SKMNASFVML…IRRENFRVIE (432 aa). Residues Asn89 and Asn144 are each glycosylated (N-linked (GlcNAc...) asparagine). The active-site Nucleophile is Glu367.

Belongs to the glycosyltransferase 15 family.

Its subcellular location is the membrane. In terms of biological role, possible glycosyltransferase that transfers an alpha-D-mannosyl residue from GDP-mannose into lipid-linked oligosaccharide, forming an alpha-(1-&gt;2)-D-mannosyl-D-mannose linkage. The protein is Probable mannosyltransferase KTR7 (KTR7) of Saccharomyces cerevisiae (strain ATCC 204508 / S288c) (Baker's yeast).